The sequence spans 400 residues: Inosine-5'-monophosphate dehydrogenase (400 aa).

Basic and acidic residues predominate over residues 96–116; the sequence is KNESTPDQNLDKESTDGKDTK. Residues 96-125 form a disordered region; the sequence is KNESTPDQNLDKESTDGKDTKSNNNIDAYS. NAD(+)-binding positions include Asp-163 and 212–214; that span reads GIG. K(+)-binding residues include Gly-214 and Gly-216. Residue Ser-217 coordinates IMP. Cys-219 contacts K(+). Cys-219 (thioimidate intermediate) is an active-site residue. IMP-binding positions include 252–254, 275–276, and 299–303; these read DGG, GS, and YRGMG. Arg-315 (proton acceptor) is an active-site residue. Glu-329 contacts IMP. The K(+) site is built by Glu-383, Ser-384, and His-385.

It belongs to the IMPDH/GMPR family. Homotetramer. Requires K(+) as cofactor.

The protein localises to the cytoplasm. It catalyses the reaction IMP + NAD(+) + H2O = XMP + NADH + H(+). The protein operates within purine metabolism; XMP biosynthesis via de novo pathway; XMP from IMP: step 1/1. Its activity is regulated as follows. Mycophenolic acid (MPA) is a non-competitive inhibitor that prevents formation of the closed enzyme conformation by binding to the same site as the amobile flap. In contrast, mizoribine monophosphate (MZP) is a competitive inhibitor that induces the closed conformation. MPA is a potent inhibitor of mammalian IMPDHs but a poor inhibitor of the bacterial enzymes. MZP is a more potent inhibitor of bacterial IMPDH. Resistant to mycophenolic acid (MPA) inhibition. In terms of biological role, catalyzes the conversion of inosine 5'-phosphate (IMP) to xanthosine 5'-phosphate (XMP), the first committed and rate-limiting step in the de novo synthesis of guanine nucleotides, and therefore plays an important role in the regulation of cell growth. This Cryptosporidium parvum protein is Inosine-5'-monophosphate dehydrogenase.